The following is a 369-amino-acid chain: S-(hydroxymethyl)glutathione dehydrogenase (369 aa).

Residues cysteine 40, histidine 62, cysteine 92, cysteine 95, cysteine 98, cysteine 106, and cysteine 169 each coordinate Zn(2+).

Belongs to the zinc-containing alcohol dehydrogenase family. Class-III subfamily. As to quaternary structure, homodimer. Requires Zn(2+) as cofactor.

The protein localises to the cytoplasm. The enzyme catalyses S-(hydroxymethyl)glutathione + NADP(+) = S-formylglutathione + NADPH + H(+). It carries out the reaction S-(hydroxymethyl)glutathione + NAD(+) = S-formylglutathione + NADH + H(+). It catalyses the reaction a primary alcohol + NAD(+) = an aldehyde + NADH + H(+). The catalysed reaction is a secondary alcohol + NAD(+) = a ketone + NADH + H(+). The enzyme catalyses S-nitrosoglutathione + NADH + H(+) = S-(hydroxysulfenamide)glutathione + NAD(+). Functionally, has high formaldehyde dehydrogenase activity in the presence of glutathione and catalyzes the oxidation of normal alcohols in a reaction that is not GSH-dependent. In addition, hemithiolacetals other than those formed from GSH, including omega-thiol fatty acids, also are substrates. Also acts as a S-nitroso-glutathione reductase by catalyzing the NADH-dependent reduction of S-nitrosoglutathione. The protein is S-(hydroxymethyl)glutathione dehydrogenase (frmA) of Escherichia coli (strain ATCC 8739 / DSM 1576 / NBRC 3972 / NCIMB 8545 / WDCM 00012 / Crooks).